A 206-amino-acid chain; its full sequence is MSRSKSSGRWLQEHFNDQYVKDSQKDGYRSRASYKLIELNDKDKLIKSGQTVVDLGAAPGGWSQVAAQIVGDGGRVVASDILPMDSLAGVDFVQGDFTEEAVLEQLLELLGEAKADLVISDMAPNMSGIADVDQPKSMYLVELALDMAKTTLKIGGSFACKVFQGEGFDELVLACRECFQKVLVRKPSASRPRSREVYIVAKGYKG.

The S-adenosyl-L-methionine site is built by G60, W62, D80, D96, and D121. K161 serves as the catalytic Proton acceptor.

This sequence belongs to the class I-like SAM-binding methyltransferase superfamily. RNA methyltransferase RlmE family.

Its subcellular location is the cytoplasm. The catalysed reaction is uridine(2552) in 23S rRNA + S-adenosyl-L-methionine = 2'-O-methyluridine(2552) in 23S rRNA + S-adenosyl-L-homocysteine + H(+). In terms of biological role, specifically methylates the uridine in position 2552 of 23S rRNA at the 2'-O position of the ribose in the fully assembled 50S ribosomal subunit. This chain is Ribosomal RNA large subunit methyltransferase E, found in Saccharophagus degradans (strain 2-40 / ATCC 43961 / DSM 17024).